A 300-amino-acid polypeptide reads, in one-letter code: Beta-lactamase (300 aa).

A signal peptide spans 1–29 (MTMFKTTFRQTATIAVSLISLLVSPMLWA). Serine 75 serves as the catalytic Acyl-ester intermediate. A substrate-binding site is contributed by 239-241 (KTG).

The protein belongs to the class-A beta-lactamase family. As to quaternary structure, monomer.

The catalysed reaction is a beta-lactam + H2O = a substituted beta-amino acid. Functionally, hydrolyzes broad-spectrum beta-lactam antibiotics. Active against cephalosporins such as cefuroxime and cefotaxime. The protein is Beta-lactamase (blaB) of Proteus vulgaris.